A 976-amino-acid chain; its full sequence is Leucine--tRNA ligase (976 aa).

Over residues 1-23 the composition is skewed to low complexity; sequence MTESPTTTPGSTSGAPSGVPSGV. The tract at residues 1-34 is disordered; it reads MTESPTTTPGSTSGAPSGVPSGVNDAESDAPRHR. Positions 86–97 match the 'HIGH' region motif; sequence PYPSGEGLHVGH. Residues 745–749 carry the 'KMSKS' region motif; the sequence is KIGKS. Position 748 (Lys748) interacts with ATP.

Belongs to the class-I aminoacyl-tRNA synthetase family.

The protein resides in the cytoplasm. The catalysed reaction is tRNA(Leu) + L-leucine + ATP = L-leucyl-tRNA(Leu) + AMP + diphosphate. This Mycobacterium marinum (strain ATCC BAA-535 / M) protein is Leucine--tRNA ligase.